A 207-amino-acid chain; its full sequence is MIGRLRGNLLEKQPPELLIEVSGIGYEVQMPMSCFYELPEVGSEAIIYTHYVVREDAQLLYGFNTKNERALFREVIKANGVGPKLGLAILSGMTAAQFVQSVEREDISTLVKLPGVGKKTAERLVVEMKDRLKGWGAGDLFTPATDAAPMDDGSEFITSPQSAVDEAVSALIALGYKPQQASKTVSQVAKPDMTSEVLIRESLKSMI.

A domain I region spans residues methionine 1–asparagine 64. A domain II region spans residues threonine 65 to proline 143. The tract at residues alanine 144–threonine 158 is flexible linker. The domain III stretch occupies residues serine 159 to isoleucine 207.

Belongs to the RuvA family. In terms of assembly, homotetramer. Forms an RuvA(8)-RuvB(12)-Holliday junction (HJ) complex. HJ DNA is sandwiched between 2 RuvA tetramers; dsDNA enters through RuvA and exits via RuvB. An RuvB hexamer assembles on each DNA strand where it exits the tetramer. Each RuvB hexamer is contacted by two RuvA subunits (via domain III) on 2 adjacent RuvB subunits; this complex drives branch migration. In the full resolvosome a probable DNA-RuvA(4)-RuvB(12)-RuvC(2) complex forms which resolves the HJ.

It is found in the cytoplasm. The RuvA-RuvB-RuvC complex processes Holliday junction (HJ) DNA during genetic recombination and DNA repair, while the RuvA-RuvB complex plays an important role in the rescue of blocked DNA replication forks via replication fork reversal (RFR). RuvA specifically binds to HJ cruciform DNA, conferring on it an open structure. The RuvB hexamer acts as an ATP-dependent pump, pulling dsDNA into and through the RuvAB complex. HJ branch migration allows RuvC to scan DNA until it finds its consensus sequence, where it cleaves and resolves the cruciform DNA. The sequence is that of Holliday junction branch migration complex subunit RuvA from Aliivibrio fischeri (strain MJ11) (Vibrio fischeri).